The chain runs to 362 residues: Phosphoserine aminotransferase (362 aa).

Positions 9 and 42 each coordinate L-glutamate. Residues 76–77 (GR), tryptophan 102, threonine 153, aspartate 174, and glutamine 197 contribute to the pyridoxal 5'-phosphate site. At lysine 198 the chain carries N6-(pyridoxal phosphate)lysine. 239–240 (NT) is a pyridoxal 5'-phosphate binding site.

This sequence belongs to the class-V pyridoxal-phosphate-dependent aminotransferase family. SerC subfamily. As to quaternary structure, homodimer. It depends on pyridoxal 5'-phosphate as a cofactor.

It is found in the cytoplasm. It carries out the reaction O-phospho-L-serine + 2-oxoglutarate = 3-phosphooxypyruvate + L-glutamate. The enzyme catalyses 4-(phosphooxy)-L-threonine + 2-oxoglutarate = (R)-3-hydroxy-2-oxo-4-phosphooxybutanoate + L-glutamate. Its pathway is amino-acid biosynthesis; L-serine biosynthesis; L-serine from 3-phospho-D-glycerate: step 2/3. It functions in the pathway cofactor biosynthesis; pyridoxine 5'-phosphate biosynthesis; pyridoxine 5'-phosphate from D-erythrose 4-phosphate: step 3/5. Catalyzes the reversible conversion of 3-phosphohydroxypyruvate to phosphoserine and of 3-hydroxy-2-oxo-4-phosphonooxybutanoate to phosphohydroxythreonine. The chain is Phosphoserine aminotransferase from Escherichia coli (strain ATCC 8739 / DSM 1576 / NBRC 3972 / NCIMB 8545 / WDCM 00012 / Crooks).